We begin with the raw amino-acid sequence, 449 residues long: UDP-N-acetylglucosamine 1-carboxyvinyltransferase (449 aa).

51 to 52 is a binding site for phosphoenolpyruvate; sequence KN. Arginine 121 lines the UDP-N-acetyl-alpha-D-glucosamine pocket. Residue cysteine 145 is the Proton donor of the active site. 2-(S-cysteinyl)pyruvic acid O-phosphothioketal is present on cysteine 145. UDP-N-acetyl-alpha-D-glucosamine contacts are provided by residues 150 to 154, aspartate 333, and isoleucine 355; that span reads RPVDQ.

This sequence belongs to the EPSP synthase family. MurA subfamily.

It is found in the cytoplasm. The catalysed reaction is phosphoenolpyruvate + UDP-N-acetyl-alpha-D-glucosamine = UDP-N-acetyl-3-O-(1-carboxyvinyl)-alpha-D-glucosamine + phosphate. The protein operates within cell wall biogenesis; peptidoglycan biosynthesis. In terms of biological role, cell wall formation. Adds enolpyruvyl to UDP-N-acetylglucosamine. The protein is UDP-N-acetylglucosamine 1-carboxyvinyltransferase of Burkholderia lata (strain ATCC 17760 / DSM 23089 / LMG 22485 / NCIMB 9086 / R18194 / 383).